The following is a 615-amino-acid chain: TORTIFOLIA1-like protein 3 (615 aa).

HEAT repeat units lie at residues 44-81 (GNLQ…SLPL), 86-123 (PFLS…RTTK), 125-163 (PFYS…SASD), 168-205 (RLGQ…AGGL), and 213-250 (GGLK…MERN). Positions 288–446 (VPDLSEEVSP…HHVLSENPNS (159 aa)) are disordered. The segment covering 318–347 (RVGSTPAKSRTHLVNRSTPPGSSLATTARK) has biased composition (polar residues). Over residues 391–406 (DEQHCDHDENAKETSH) the composition is skewed to basic and acidic residues. Residues 407-426 (SSHNTVQKLGGVSSSLNGNI) show a composition bias toward polar residues. The residue at position 456 (serine 456) is a Phosphoserine.

The polypeptide is TORTIFOLIA1-like protein 3 (Arabidopsis thaliana (Mouse-ear cress)).